The chain runs to 120 residues: Ribonuclease P protein component (120 aa).

Belongs to the RnpA family. As to quaternary structure, consists of a catalytic RNA component (M1 or rnpB) and a protein subunit.

It carries out the reaction Endonucleolytic cleavage of RNA, removing 5'-extranucleotides from tRNA precursor.. RNaseP catalyzes the removal of the 5'-leader sequence from pre-tRNA to produce the mature 5'-terminus. It can also cleave other RNA substrates such as 4.5S RNA. The protein component plays an auxiliary but essential role in vivo by binding to the 5'-leader sequence and broadening the substrate specificity of the ribozyme. This chain is Ribonuclease P protein component, found in Chlamydia trachomatis serovar A (strain ATCC VR-571B / DSM 19440 / HAR-13).